The chain runs to 355 residues: Serine acetyltransferase 4 (355 aa).

This sequence belongs to the transferase hexapeptide repeat family. In terms of assembly, homomultimer. As to expression, localized in vascular tissues, particularly in phloem.

It is found in the cytoplasm. It carries out the reaction L-serine + acetyl-CoA = O-acetyl-L-serine + CoA. It functions in the pathway amino-acid biosynthesis; L-cysteine biosynthesis; L-cysteine from L-serine: step 1/2. With respect to regulation, feedback inhibitions by L-Ser and acetyl-CoA. This is Serine acetyltransferase 4 from Arabidopsis thaliana (Mouse-ear cress).